The sequence spans 239 residues: Probable transcriptional regulatory protein BPUM_0743 (239 aa).

It belongs to the TACO1 family. YeeN subfamily.

Its subcellular location is the cytoplasm. The polypeptide is Probable transcriptional regulatory protein BPUM_0743 (Bacillus pumilus (strain SAFR-032)).